Reading from the N-terminus, the 68-residue chain is UPF0434 protein BMA10229_A1047 (68 aa).

It belongs to the UPF0434 family.

The protein is UPF0434 protein BMA10229_A1047 of Burkholderia mallei (strain NCTC 10229).